The primary structure comprises 206 residues: Imidazole glycerol phosphate synthase subunit HisH (206 aa).

The Glutamine amidotransferase type-1 domain maps to 1 to 206 (MIVIIDYGMG…LRILKNFGDM (206 aa)). The Nucleophile role is filled by Cys-79. Active-site residues include His-188 and Glu-190.

In terms of assembly, heterodimer of HisH and HisF.

The protein resides in the cytoplasm. The catalysed reaction is 5-[(5-phospho-1-deoxy-D-ribulos-1-ylimino)methylamino]-1-(5-phospho-beta-D-ribosyl)imidazole-4-carboxamide + L-glutamine = D-erythro-1-(imidazol-4-yl)glycerol 3-phosphate + 5-amino-1-(5-phospho-beta-D-ribosyl)imidazole-4-carboxamide + L-glutamate + H(+). It carries out the reaction L-glutamine + H2O = L-glutamate + NH4(+). It functions in the pathway amino-acid biosynthesis; L-histidine biosynthesis; L-histidine from 5-phospho-alpha-D-ribose 1-diphosphate: step 5/9. Its function is as follows. IGPS catalyzes the conversion of PRFAR and glutamine to IGP, AICAR and glutamate. The HisH subunit catalyzes the hydrolysis of glutamine to glutamate and ammonia as part of the synthesis of IGP and AICAR. The resulting ammonia molecule is channeled to the active site of HisF. In Syntrophotalea carbinolica (strain DSM 2380 / NBRC 103641 / GraBd1) (Pelobacter carbinolicus), this protein is Imidazole glycerol phosphate synthase subunit HisH.